Here is a 323-residue protein sequence, read N- to C-terminus: o-succinylbenzoate synthase (323 aa).

Lys-134 functions as the Proton donor in the catalytic mechanism. Positions 162, 191, and 214 each coordinate Mg(2+). Residue Lys-236 is the Proton acceptor of the active site.

The protein belongs to the mandelate racemase/muconate lactonizing enzyme family. MenC type 1 subfamily. It depends on a divalent metal cation as a cofactor.

The catalysed reaction is (1R,6R)-6-hydroxy-2-succinyl-cyclohexa-2,4-diene-1-carboxylate = 2-succinylbenzoate + H2O. It participates in quinol/quinone metabolism; 1,4-dihydroxy-2-naphthoate biosynthesis; 1,4-dihydroxy-2-naphthoate from chorismate: step 4/7. Its pathway is quinol/quinone metabolism; menaquinone biosynthesis. Its function is as follows. Converts 2-succinyl-6-hydroxy-2,4-cyclohexadiene-1-carboxylate (SHCHC) to 2-succinylbenzoate (OSB). The sequence is that of o-succinylbenzoate synthase from Yersinia pseudotuberculosis serotype O:1b (strain IP 31758).